Reading from the N-terminus, the 356-residue chain is tRNA pseudouridine synthase D (356 aa).

Asp84 (nucleophile) is an active-site residue. The region spanning 159–302 is the TRUD domain; the sequence is GVPNYYGPQR…RRGARRPIRV (144 aa).

This sequence belongs to the pseudouridine synthase TruD family.

It catalyses the reaction uridine(13) in tRNA = pseudouridine(13) in tRNA. Functionally, responsible for synthesis of pseudouridine from uracil-13 in transfer RNAs. This Thermus thermophilus (strain ATCC 27634 / DSM 579 / HB8) protein is tRNA pseudouridine synthase D.